A 239-amino-acid polypeptide reads, in one-letter code: Carboxy-S-adenosyl-L-methionine synthase (239 aa).

Residues Tyr35, Gly64–Ser66, Asp88–Asn89, and Arg195 each bind S-adenosyl-L-methionine.

This sequence belongs to the class I-like SAM-binding methyltransferase superfamily. Cx-SAM synthase family. As to quaternary structure, homodimer.

It carries out the reaction prephenate + S-adenosyl-L-methionine = carboxy-S-adenosyl-L-methionine + 3-phenylpyruvate + H2O. In terms of biological role, catalyzes the conversion of S-adenosyl-L-methionine (SAM) to carboxy-S-adenosyl-L-methionine (Cx-SAM). The chain is Carboxy-S-adenosyl-L-methionine synthase from Helicobacter pylori (strain G27).